A 285-amino-acid chain; its full sequence is Hypersensitive-induced response protein 3 (285 aa).

G2 carries the N-myristoyl glycine lipid modification. Coiled-coil stretches lie at residues 113–139 (NLDD…MTAY) and 165–185 (NAAA…KIIQ).

In terms of assembly, self-interacts and forms heteromers. Interacts with NB-LRR class of R proteins before R proteins (e.g. RPS2 or RPM1) are activated by the effectors.

It is found in the cell membrane. This Arabidopsis thaliana (Mouse-ear cress) protein is Hypersensitive-induced response protein 3 (HIR3).